A 161-amino-acid polypeptide reads, in one-letter code: Probable chemoreceptor glutamine deamidase CheD (161 aa).

This sequence belongs to the CheD family.

It catalyses the reaction L-glutaminyl-[protein] + H2O = L-glutamyl-[protein] + NH4(+). Functionally, probably deamidates glutamine residues to glutamate on methyl-accepting chemotaxis receptors (MCPs), playing an important role in chemotaxis. The sequence is that of Probable chemoreceptor glutamine deamidase CheD from Syntrophomonas wolfei subsp. wolfei (strain DSM 2245B / Goettingen).